The primary structure comprises 74 residues: Delta-actitoxin-Amc3a (74 aa).

Residues 1-19 form the signal peptide; the sequence is MNRLIILVVAAVFLGMASA. The propeptide occupies 20–24; the sequence is EEDVL. Position 29 is a hydroxyproline (Pro-29). 3 disulfide bridges follow: Cys-30/Cys-70, Cys-32/Cys-60, and Cys-53/Cys-71. The residue at position 73 (Gln-73) is a Glutamine amide.

It belongs to the sea anemone sodium channel inhibitory toxin family. Type I subfamily.

It is found in the secreted. The protein resides in the nematocyst. Functionally, inhibits voltage-gated sodium channels (Nav). This is Delta-actitoxin-Amc3a from Antheopsis maculata (Sea anemone).